Reading from the N-terminus, the 170-residue chain is Adenine phosphoribosyltransferase (170 aa).

It belongs to the purine/pyrimidine phosphoribosyltransferase family. Homodimer.

It localises to the cytoplasm. The enzyme catalyses AMP + diphosphate = 5-phospho-alpha-D-ribose 1-diphosphate + adenine. It functions in the pathway purine metabolism; AMP biosynthesis via salvage pathway; AMP from adenine: step 1/1. Functionally, catalyzes a salvage reaction resulting in the formation of AMP, that is energically less costly than de novo synthesis. This is Adenine phosphoribosyltransferase from Prochlorococcus marinus (strain AS9601).